We begin with the raw amino-acid sequence, 354 residues long: Serum paraoxonase/lactonase 3 (354 aa).

A glycan (N-linked (GlcNAc...) asparagine) is linked at N29. A disulfide bond links C42 and C352. Residues E53 and D54 each coordinate Ca(2+). H114 acts as the Proton acceptor in catalysis. I116 is a binding site for Ca(2+). S165 carries the post-translational modification Phosphoserine. Ca(2+)-binding residues include N167, D168, N223, D268, and N269. N-linked (GlcNAc...) asparagine glycans are attached at residues N269 and N323.

The protein belongs to the paraoxonase family. As to quaternary structure, homodimer. Requires Ca(2+) as cofactor. In terms of processing, the signal sequence is not cleaved.

Its subcellular location is the secreted. It is found in the extracellular space. It catalyses the reaction a phenyl acetate + H2O = a phenol + acetate + H(+). It carries out the reaction An aryl dialkyl phosphate + H2O = dialkyl phosphate + an aryl alcohol.. The enzyme catalyses an N-acyl-L-homoserine lactone + H2O = an N-acyl-L-homoserine + H(+). Its function is as follows. Has low activity towards the organophosphate paraxon and aromatic carboxylic acid esters. Rapidly hydrolyzes lactones such as statin prodrugs (e.g. lovastatin). Hydrolyzes aromatic lactones and 5- or 6-member ring lactones with aliphatic substituents but not simple lactones or those with polar substituents. This Homo sapiens (Human) protein is Serum paraoxonase/lactonase 3 (PON3).